The primary structure comprises 301 residues: (R)-2-haloacid dehalogenase (301 aa).

This sequence belongs to the HAD-like hydrolase superfamily. S-2-haloalkanoic acid dehalogenase family. In terms of assembly, homotetramer.

It catalyses the reaction an (R)-2-haloacid + H2O = a (2S)-2-hydroxycarboxylate + a halide anion + H(+). Catalyzes the hydrolytic dehalogenation of small (R)-2-haloalkanoic acids to yield the corresponding (S)-2-hydroxyalkanoic acids. Acts on acids of short chain lengths, C(2) to C(4), with inversion of configuration at C-2. This chain is (R)-2-haloacid dehalogenase (hadD), found in Pseudomonas putida (Arthrobacter siderocapsulatus).